We begin with the raw amino-acid sequence, 318 residues long: Protein OPG137 (318 aa).

Positions 145–172 form a coiled coil; that stretch reads VYDKDKRIQMLEDEVVNLRNQRSNTKSS.

It belongs to the orthopoxvirus OPG137 family. Homomultimer. Interacts with OPG160. In terms of processing, phosphorylated by a OPG054-independent mechanism.

The protein localises to the host cytoplasm. In terms of biological role, required for viral crescent formation early during virus morphogenesis. In Vaccinia virus (strain Western Reserve) (VACV), this protein is Protein OPG137 (OPG137).